The sequence spans 131 residues: Profilin-1 (131 aa).

It belongs to the profilin family. As to quaternary structure, occurs in many kinds of cells as a complex with monomeric actin in a 1:1 ratio. In terms of tissue distribution, expressed at low levels roots, leaves, stems, flowers and siliques. Expressed in leaf epidermal cells, trichomes and stem epidermal cells. Detected in phloem exudates (at protein level).

The protein resides in the cytoplasm. The protein localises to the cytoskeleton. In terms of biological role, binds to actin monomers and regulates the organization of the actin cytoskeleton. At high concentrations, profilin prevents the polymerization of actin, whereas it enhances it at low concentrations. At low concentrations, associates with the poly-proline motif of formins to enhance actin filament elongation rate. Binds ACT1, ACT7 and ACT11 and inhibits actin polymerization. Coordinates the stochastic dynamic properties of actin filaments by modulating formin-mediated actin nucleation and assembly during axial cell expansion. Binds G-actin and poly-L-proline in vitro. Inhibits cell growth of various pathogenic fungal strains. May play a role as antifungal proteins in the defense system against fungal pathogen attacks. The protein is Profilin-1 of Arabidopsis thaliana (Mouse-ear cress).